The following is a 425-amino-acid chain: MKQTDDKDSLLNRLLLSLGILLFIRMGTFLPVPGIDHGHLEFYIERHFRLRTLVSTFAGDNTVVVGLFTLNIFPYINASIIMQLLVSLLPGLSKLQKEGGAEARRSINSLTRLLTLGWSLIQSTSVAFYLKRALFEWNLVLAFEIVIWLTTGAMIVLWLSEIITEYGLGNGPSLLIYTNIVSSLPGFVKQVITESSGKVPIGSWLLSGFVLFVALYGIVLLQEGMRKVYLISSKQLNQTSLPFSGSSNLESGYYIPLRFNQAGVMPIILTTAVLVIPTFIYNLGLLRILTPLITLPVFVKSYKIIYWVSYFVLILLFSLFYSTIVVNPKDLSDELQKMAVSIPGIRPGVETTFYLKQVMKRVTLLGAIMLALLATLPNIIQAILSLSGFTNLGTTSLLILVGVILDLTREMRSIILSNIYYDMFD.

Helical transmembrane passes span 15–35 (LLSL…VPGI), 62–82 (TVVV…SIIM), 113–131 (LLTL…FYLK), 139–159 (LVLA…VLWL), 168–188 (LGNG…PGFV), 201–221 (IGSW…IVLL), 266–286 (PIIL…LGLL), 304–324 (IIYW…YSTI), 364–384 (LLGA…QAIL), and 385–405 (SLSG…GVIL).

This sequence belongs to the SecY/SEC61-alpha family. As to quaternary structure, component of the plastid Sec protein translocase complex, which is composed of at least SecY, SecE and SecG.

Its subcellular location is the plastid. The protein localises to the chloroplast thylakoid membrane. The central subunit of the protein translocation channel SecYE. Consists of two halves formed by TMs 1-5 and 6-10. These two domains form a lateral gate at the front which open onto the bilayer between TMs 2 and 7, and are clamped together by SecE at the back. The channel is closed by both a pore ring composed of hydrophobic SecY resides and a short helix (helix 2A) on the extracellular side of the membrane which forms a plug. The protein is Protein translocase subunit SecY of Trieres chinensis (Marine centric diatom).